Reading from the N-terminus, the 36-residue chain is Photosystem II reaction center protein M (36 aa).

Residues 5-25 traverse the membrane as a helical segment; it reads ILAFIATALFILVPTAFLLII.

It belongs to the PsbM family. As to quaternary structure, PSII is composed of 1 copy each of membrane proteins PsbA, PsbB, PsbC, PsbD, PsbE, PsbF, PsbH, PsbI, PsbJ, PsbK, PsbL, PsbM, PsbT, PsbX, PsbY, PsbZ, Psb30/Ycf12, at least 3 peripheral proteins of the oxygen-evolving complex and a large number of cofactors. It forms dimeric complexes.

It localises to the plastid. It is found in the chloroplast thylakoid membrane. Its function is as follows. One of the components of the core complex of photosystem II (PSII). PSII is a light-driven water:plastoquinone oxidoreductase that uses light energy to abstract electrons from H(2)O, generating O(2) and a proton gradient subsequently used for ATP formation. It consists of a core antenna complex that captures photons, and an electron transfer chain that converts photonic excitation into a charge separation. This subunit is found at the monomer-monomer interface. The chain is Photosystem II reaction center protein M from Panax ginseng (Korean ginseng).